The following is a 20-amino-acid chain: Alkaline phosphatase (20 aa).

Expressed by the venom gland.

The protein resides in the secreted. The enzyme catalyses a phosphate monoester + H2O = an alcohol + phosphate. Its function is as follows. Has hemorrhagic activity. This Deinagkistrodon acutus (Hundred-pace snake) protein is Alkaline phosphatase.